The chain runs to 238 residues: N-terminal acetyltransferase A complex catalytic subunit ARD1 (238 aa).

One can recognise an N-acetyltransferase domain in the interval 35-195; it reads YHILSWPEAS…DAYAMKKVLK (161 aa).

The protein belongs to the acetyltransferase family. ARD1 subfamily. In terms of assembly, component of the N-terminal acetyltransferase A (NatA) complex, which is composed of ARD1, NAT1 and NAT5. Can self-associate.

It localises to the cytoplasm. It catalyses the reaction N-terminal glycyl-[protein] + acetyl-CoA = N-terminal N(alpha)-acetylglycyl-[protein] + CoA + H(+). It carries out the reaction N-terminal L-alanyl-[protein] + acetyl-CoA = N-terminal N(alpha)-acetyl-L-alanyl-[protein] + CoA + H(+). The enzyme catalyses N-terminal L-seryl-[protein] + acetyl-CoA = N-terminal N(alpha)-acetyl-L-seryl-[protein] + CoA + H(+). The catalysed reaction is N-terminal L-valyl-[protein] + acetyl-CoA = N-terminal N(alpha)-acetyl-L-valyl-[protein] + CoA + H(+). It catalyses the reaction N-terminal L-cysteinyl-[protein] + acetyl-CoA = N-terminal N(alpha)-acetyl-L-cysteinyl-[protein] + CoA + H(+). It carries out the reaction N-terminal L-threonyl-[protein] + acetyl-CoA = N-terminal N(alpha)-acetyl-L-threonyl-[protein] + CoA + H(+). Functionally, catalytic component of the NatA N-terminal acetyltransferase, which catalyzes acetylation of proteins beginning with Met-Ser, Met-Gly and Met-Ala. N-acetylation plays a role in normal eukaryotic translation and processing, protect against proteolytic degradation and protein turnover. The sequence is that of N-terminal acetyltransferase A complex catalytic subunit ARD1 (ARD1) from Saccharomyces cerevisiae (strain ATCC 204508 / S288c) (Baker's yeast).